Consider the following 170-residue polypeptide: Large ribosomal subunit protein uL10 (170 aa).

Belongs to the universal ribosomal protein uL10 family. As to quaternary structure, part of the ribosomal stalk of the 50S ribosomal subunit. The N-terminus interacts with L11 and the large rRNA to form the base of the stalk. The C-terminus forms an elongated spine to which L12 dimers bind in a sequential fashion forming a multimeric L10(L12)X complex.

Its function is as follows. Forms part of the ribosomal stalk, playing a central role in the interaction of the ribosome with GTP-bound translation factors. This is Large ribosomal subunit protein uL10 from Nitratiruptor sp. (strain SB155-2).